Here is a 250-residue protein sequence, read N- to C-terminus: DNA repair protein RecO (250 aa).

The protein belongs to the RecO family.

Functionally, involved in DNA repair and RecF pathway recombination. This chain is DNA repair protein RecO, found in Thermodesulfovibrio yellowstonii (strain ATCC 51303 / DSM 11347 / YP87).